A 378-amino-acid chain; its full sequence is Spermatogenic leucine zipper protein 1 (378 aa).

A disordered region spans residues 1–31 (MSDTDNSAEMPARCPSPNPAPGAKQEPPNSG). Ser-106 is modified (phosphoserine). The tract at residues 116–122 (KNKIRFK) is interaction with PPP1CC isoform gamma-2. The interval 116 to 127 (KNKIRFKDDLFI) is helix-loop-helix motif. Residues 128 to 193 (HFDPEREQNT…HLRGEYRKLR (66 aa)) form a basic motif region. Positions 182–233 (SLHLRGEYRKLRNNMEQLLQEADHWSKQHNELSELMRSYQECQNETQETTDK) form a coiled coil. Ser-207 carries the phosphoserine modification. Residues 252–273 (LEEQVKKLSHDTHALHLIAALL) form a leucine-zipper region.

As to quaternary structure, interacts with PPP1CC isoform gamma-2. This interaction can prevent SPZ1 binding to the E-box and inhibits PPP1CC activity. Post-translationally, phosphorylated by MAPK1/ERK2 and MAPK3/ERK1. As to expression, expressed specifically in the testis and epidydimis. In the testis expressed in both germ cells and somatic cells (Sertoli and Leydig cells). Expressed in several tumor cell lines.

The protein localises to the cytoplasm. The protein resides in the nucleus. Transcription factor that binds to the DNA sequence 5'-CANNTG-3'(E box) and the G-box motif. Directly binds to a guanine-rich region of the PCNA promoter and up-regulates its expression which in turn induces cell transformation and tumor formation. May play an important role in the regulation of cell proliferation and differentiation during spermatogenesis. The chain is Spermatogenic leucine zipper protein 1 (Spz1) from Mus musculus (Mouse).